Consider the following 443-residue polypeptide: Thymidine phosphorylase (443 aa).

This sequence belongs to the thymidine/pyrimidine-nucleoside phosphorylase family. In terms of assembly, homodimer.

It catalyses the reaction thymidine + phosphate = 2-deoxy-alpha-D-ribose 1-phosphate + thymine. It participates in pyrimidine metabolism; dTMP biosynthesis via salvage pathway; dTMP from thymine: step 1/2. Functionally, the enzymes which catalyze the reversible phosphorolysis of pyrimidine nucleosides are involved in the degradation of these compounds and in their utilization as carbon and energy sources, or in the rescue of pyrimidine bases for nucleotide synthesis. The protein is Thymidine phosphorylase of Shewanella putrefaciens (strain CN-32 / ATCC BAA-453).